We begin with the raw amino-acid sequence, 134 residues long: 4-carboxymuconolactone decarboxylase (134 aa).

This sequence belongs to the carboxymuconolactone decarboxylase family.

It carries out the reaction (R)-2-(carboxymethyl)-5-oxo-2,5-dihydro-2-furoate + H(+) = (4,5-dihydro-5-oxofuran-2-yl)-acetate + CO2. It functions in the pathway aromatic compound metabolism; beta-ketoadipate pathway; 5-oxo-4,5-dihydro-2-furylacetate from 3-carboxy-cis,cis-muconate: step 2/2. The chain is 4-carboxymuconolactone decarboxylase (pcaC) from Acinetobacter baylyi (strain ATCC 33305 / BD413 / ADP1).